Reading from the N-terminus, the 857-residue chain is Mitogen-activated protein kinase kinase kinase dlk-1 (857 aa).

Residues 62 to 304 (ISNLEWLGSG…FSHIRQHWEI (243 aa)) enclose the Protein kinase domain. ATP-binding positions include 68 to 76 (LGSGSQGAV) and Lys89. Asp173 acts as the Proton acceptor in catalysis. Disordered regions lie at residues 441–503 (EEMS…ISRN), 572–625 (RIAS…PSRN), 733–775 (NAND…MESE), and 818–857 (HSIKTHRRTSSNPQAIIHQRIEEYSSSATEDSDDAGAVRI). Residues 467–488 (SSGAQSSPFSRQSSCRSSAGQQ) show a composition bias toward low complexity. The segment covering 609 to 623 (APRSSSKLNRSSYPS) has biased composition (polar residues). A compositionally biased stretch (acidic residues) spans 753 to 762 (ADVESSEDEG). Residues 763-772 (NGNNILNTSM) are compositionally biased toward polar residues.

It belongs to the protein kinase superfamily. STE Ser/Thr protein kinase family. MAP kinase kinase kinase subfamily. It depends on Mg(2+) as a cofactor. Post-translationally, ubiquitinated by rpm-1. Negatively regulated by ubiquitination by fsn-1 bound rpm-1, followed by degradation.

The protein resides in the synapse. The enzyme catalyses L-seryl-[protein] + ATP = O-phospho-L-seryl-[protein] + ADP + H(+). The catalysed reaction is L-threonyl-[protein] + ATP = O-phospho-L-threonyl-[protein] + ADP + H(+). Functionally, component of a MAP kinase pathway that functions presynaptically to regulate synaptic architecture and presynaptic differentiation. Phosphorylates and activates mkk-4. The polypeptide is Mitogen-activated protein kinase kinase kinase dlk-1 (Caenorhabditis briggsae).